The following is an 83-amino-acid chain: Mu-theraphotoxin-Hhn2g (83 aa).

The signal sequence occupies residues 1-21 (MKASMYLALAGLVLLFVVGYA). Residues 22-48 (SESEEKEFPRELLSKIFAVDDFKGEER) constitute a propeptide that is removed on maturation. 2 disulfides stabilise this stretch: Cys-50/Cys-65 and Cys-57/Cys-70. Position 81 is a leucine amide (Leu-81).

Belongs to the neurotoxin 10 (Hwtx-1) family. 15 (Hntx-3) subfamily. In terms of assembly, monomer. As to expression, expressed by the venom gland.

The protein localises to the secreted. In terms of biological role, lethal neurotoxin. Selectively blocks tetrodotoxin-sensitive voltage-gated sodium channels (Nav). Does not affect tetrodotoxin-resistant voltage-gated sodium channels or calcium channels. This chain is Mu-theraphotoxin-Hhn2g, found in Cyriopagopus hainanus (Chinese bird spider).